The sequence spans 76 residues: Acyl carrier protein (76 aa).

The 76-residue stretch at 1 to 76 (MATFDEVKEV…AAVDYIGSKQ (76 aa)) folds into the Carrier domain. Position 36 is an O-(pantetheine 4'-phosphoryl)serine (serine 36).

It belongs to the acyl carrier protein (ACP) family. Post-translationally, 4'-phosphopantetheine is transferred from CoA to a specific serine of apo-ACP by AcpS. This modification is essential for activity because fatty acids are bound in thioester linkage to the sulfhydryl of the prosthetic group.

The protein resides in the cytoplasm. Its pathway is lipid metabolism; fatty acid biosynthesis. In terms of biological role, carrier of the growing fatty acid chain in fatty acid biosynthesis. This is Acyl carrier protein from Deinococcus geothermalis (strain DSM 11300 / CIP 105573 / AG-3a).